Here is a 457-residue protein sequence, read N- to C-terminus: UDP-N-acetylmuramate--L-alanine ligase (457 aa).

117-123 (GTHGKTT) provides a ligand contact to ATP.

Belongs to the MurCDEF family.

Its subcellular location is the cytoplasm. The catalysed reaction is UDP-N-acetyl-alpha-D-muramate + L-alanine + ATP = UDP-N-acetyl-alpha-D-muramoyl-L-alanine + ADP + phosphate + H(+). It participates in cell wall biogenesis; peptidoglycan biosynthesis. Its function is as follows. Cell wall formation. This chain is UDP-N-acetylmuramate--L-alanine ligase, found in Clostridium kluyveri (strain NBRC 12016).